Consider the following 391-residue polypeptide: Rhizopuspepsin-2 (391 aa).

The N-terminal stretch at 1-21 (MKLTLISSCVALAFMALATEA) is a signal peptide. Positions 22-68 (APSGKKLSIPLTKNTNYKPSAKNAIQKALAKYHRFRTTSSSNSTSTE) are cleaved as a propeptide — activation peptide. One can recognise a Peptidase A1 domain in the interval 84 to 388 (YYGKVTVGTP…NQEVPEVQIA (305 aa)). Residue Asp-102 is part of the active site. Cys-115 and Cys-118 form a disulfide bridge. Asp-285 is an active-site residue. A disulfide bridge links Cys-319 with Cys-352.

Belongs to the peptidase A1 family.

It catalyses the reaction Hydrolysis of proteins with broad specificity similar to that of pepsin A, preferring hydrophobic residues at P1 and P1'. Clots milk and activates trypsinogen. Does not cleave 4-Gln-|-His-5, but does cleave 10-His-|-Leu-11 and 12-Val-|-Glu-13 in B chain of insulin.. This is Rhizopuspepsin-2 from Rhizopus niveus.